A 334-amino-acid chain; its full sequence is Peroxidase 65 (334 aa).

Positions 1–28 are cleaved as a signal peptide; sequence MSNMQFSRGFNPFVILFCLAVVAPIISA. 4 disulfide bridges follow: cysteine 42-cysteine 123, cysteine 75-cysteine 80, cysteine 129-cysteine 326, and cysteine 208-cysteine 236. The active-site Proton acceptor is the histidine 73. Ca(2+)-binding residues include aspartate 74, glycine 79, aspartate 81, and serine 83. Proline 171 is a binding site for substrate. N-linked (GlcNAc...) asparagine glycosylation is present at asparagine 174. Position 201 (histidine 201) interacts with heme b. Threonine 202 contacts Ca(2+). Asparagine 238 carries an N-linked (GlcNAc...) asparagine glycan. 3 residues coordinate Ca(2+): aspartate 250, threonine 253, and aspartate 258. N-linked (GlcNAc...) asparagine glycosylation is found at asparagine 282 and asparagine 294.

The protein belongs to the peroxidase family. Classical plant (class III) peroxidase subfamily. Heme b is required as a cofactor. Requires Ca(2+) as cofactor.

The protein localises to the secreted. The enzyme catalyses 2 a phenolic donor + H2O2 = 2 a phenolic radical donor + 2 H2O. Its function is as follows. Removal of H(2)O(2), oxidation of toxic reductants, biosynthesis and degradation of lignin, suberization, auxin catabolism, response to environmental stresses such as wounding, pathogen attack and oxidative stress. These functions might be dependent on each isozyme/isoform in each plant tissue. This is Peroxidase 65 (PER65) from Arabidopsis thaliana (Mouse-ear cress).